A 1086-amino-acid chain; its full sequence is MTNTKYYPDVSANVDFAAIEREILKFWQNNNIFQKSIDHRDGESEFIFYDGPPFANGLPHYGHLLTGFIKDVYARYQTVKGKKVERRFGWDCHGLPAEMQSEKELGISGRLAITNFGIEKFNNHCRASVMQYASEWKQYVTRQARWVAFDNAYKTMDKNFMESVLWAFKELYNKGLLYESMRVMPYSWACETPLSNFETRLDNSYRERTDKAITVSFMLNDITLFNSMISQKLGMTGGDNFKEYRILAWTTTPWTLPANLALAVGSDIDYALVNKNDVCYIIAASSVAKYAKELGLSGKENFEIIKGLKLQGLSYKPLFNYFENHPNSFKIFASNFVVEGEGTGIVHMAPGFGEDDQILCESKGIELVCPVDNSGKFTKEIPDLEGVQVFDANDKIIIKLKEQGNWIKTEQYIHNYPHCWRTDTPLIYKAVPSWYVRVTQFKDRMVELNQQINWIPHNVKDNLFGKWLENARDWSISRNRFWGTPLPVWKSDDPKYPRIDVYGSIEEIEQDFGVKINDLHRPFIDELTRTNPDDPTGKSIMRRIDDVFDCWFESGSMPYGQAHYPFENKKWFVEHFPADFIVEYSSQTRGWFYTLIVLSTALFDRPPFLNCICHGVILDATGQKLSKRLNNYADPLELFDRYGSDALRVTMLSSNVVKGQELLIDKDGKMIFDTLRLFIKPIWNAYHFFTIYANADALKGTLNFTSQNVLDIYILSKLKIAVNKIEESLDNFDTQTAYHAVSEFFEVLNNWYIRRSRARFWKKEKDTDKQNAYNTLYSCLETMTIAMSALVPMISEAIYQGLHNTAITQLNCLLLEGKHVVQNPMSGTQDYNTSVHLCNYPTLSDFEINHELVSTMDNVLDICSNSLFIRSTKNIRVRQPLACITIISKHNNNLKDFEDLIKDEINVKTVIYRDDLENYAHKKLSLNFAILGKRLPHKMKAIIDASKKGEWETSTLGLVICGEILNSNEYKLVLEPHSHIKGTANFENNSSLLILDLELTSELIEEGYARDIIRFIQHARKEADFSITDKILIEIISEFDLSKIIENYGDFIKEQTLGEFAKNFMPDYVSKVALENNLIQLKVKRL.

Residues 53–63 carry the 'HIGH' region motif; that stretch reads PFANGLPHYGH. The 'KMSKS' region motif lies at 624–628; it reads KLSKR. K627 serves as a coordination point for ATP.

This sequence belongs to the class-I aminoacyl-tRNA synthetase family. IleS type 2 subfamily. In terms of assembly, monomer. Zn(2+) is required as a cofactor.

The protein localises to the cytoplasm. The enzyme catalyses tRNA(Ile) + L-isoleucine + ATP = L-isoleucyl-tRNA(Ile) + AMP + diphosphate. Catalyzes the attachment of isoleucine to tRNA(Ile). As IleRS can inadvertently accommodate and process structurally similar amino acids such as valine, to avoid such errors it has two additional distinct tRNA(Ile)-dependent editing activities. One activity is designated as 'pretransfer' editing and involves the hydrolysis of activated Val-AMP. The other activity is designated 'posttransfer' editing and involves deacylation of mischarged Val-tRNA(Ile). The protein is Isoleucine--tRNA ligase of Rickettsia typhi (strain ATCC VR-144 / Wilmington).